The sequence spans 250 residues: tRNA pseudouridine synthase A (250 aa).

Residue Asp52 is the Nucleophile of the active site. Substrate is bound at residue Tyr110.

It belongs to the tRNA pseudouridine synthase TruA family. In terms of assembly, homodimer.

The catalysed reaction is uridine(38/39/40) in tRNA = pseudouridine(38/39/40) in tRNA. Its function is as follows. Formation of pseudouridine at positions 38, 39 and 40 in the anticodon stem and loop of transfer RNAs. This is tRNA pseudouridine synthase A from Citrifermentans bemidjiense (strain ATCC BAA-1014 / DSM 16622 / JCM 12645 / Bem) (Geobacter bemidjiensis).